Consider the following 145-residue polypeptide: MNKMERQQQIKRIIQAEHIGTQEDIKNHLQKEGIVVTQATLSRDLRAIGLLKLRDEQGKLYYSLSEPVATPFSPEVRFYVLKVDRAGFMLVLHTNLGEADVLANLIDNDAIEDILGTIAGADTLLVICRDEEIAKRFEKDLAAGL.

Belongs to the ArgR family.

Its subcellular location is the cytoplasm. Its pathway is amino-acid biosynthesis; L-arginine biosynthesis [regulation]. In terms of biological role, regulates arginine biosynthesis genes. The polypeptide is Arginine repressor (Streptococcus pyogenes serotype M3 (strain ATCC BAA-595 / MGAS315)).